The sequence spans 662 residues: UvrABC system protein B (662 aa).

A Helicase ATP-binding domain is found at 25–412 (EGIEKGLKMQ…SQKIVEQIIR (388 aa)). 38–45 (GVTGSGKT) contacts ATP. A Beta-hairpin motif is present at residues 91–114 (YYDYYQPEAYLPATDTYIEKDSAI). In terms of domain architecture, Helicase C-terminal spans 429–595 (QVDDLYGEIK…TVQKAVRDVI (167 aa)). Residues 622 to 657 (KQYVEKLTREMKEAAKALEFEKAAMLRDLIIELRAQ) form the UVR domain.

Belongs to the UvrB family. In terms of assembly, forms a heterotetramer with UvrA during the search for lesions. Interacts with UvrC in an incision complex.

Its subcellular location is the cytoplasm. In terms of biological role, the UvrABC repair system catalyzes the recognition and processing of DNA lesions. A damage recognition complex composed of 2 UvrA and 2 UvrB subunits scans DNA for abnormalities. Upon binding of the UvrA(2)B(2) complex to a putative damaged site, the DNA wraps around one UvrB monomer. DNA wrap is dependent on ATP binding by UvrB and probably causes local melting of the DNA helix, facilitating insertion of UvrB beta-hairpin between the DNA strands. Then UvrB probes one DNA strand for the presence of a lesion. If a lesion is found the UvrA subunits dissociate and the UvrB-DNA preincision complex is formed. This complex is subsequently bound by UvrC and the second UvrB is released. If no lesion is found, the DNA wraps around the other UvrB subunit that will check the other stand for damage. The protein is UvrABC system protein B of Carboxydothermus hydrogenoformans (strain ATCC BAA-161 / DSM 6008 / Z-2901).